Consider the following 203-residue polypeptide: Probable GTP-binding protein EngB (203 aa).

In terms of domain architecture, EngB-type G spans 24 to 199; the sequence is DGSEVAFAGR…HTVIETWLGL (176 aa). Residues 32-39, 59-63, 77-80, 144-147, and 178-180 contribute to the GTP site; these read GRSNAGKS, GRTQQ, DLPG, TKAD, and FSS. Positions 39 and 61 each coordinate Mg(2+).

This sequence belongs to the TRAFAC class TrmE-Era-EngA-EngB-Septin-like GTPase superfamily. EngB GTPase family. Mg(2+) is required as a cofactor.

Functionally, necessary for normal cell division and for the maintenance of normal septation. The sequence is that of Probable GTP-binding protein EngB from Xylella fastidiosa (strain Temecula1 / ATCC 700964).